The sequence spans 389 residues: Succinate--CoA ligase [ADP-forming] subunit beta (389 aa).

One can recognise an ATP-grasp domain in the interval 9–244 (KQLLAEYGIP…KTQEDETEVT (236 aa)). ATP contacts are provided by residues lysine 46, 53–55 (GRG), glycine 102, and glutamate 107. Residues asparagine 199 and aspartate 213 each contribute to the Mg(2+) site. Substrate is bound by residues asparagine 264 and 321-323 (GIV).

It belongs to the succinate/malate CoA ligase beta subunit family. As to quaternary structure, heterotetramer of two alpha and two beta subunits. Mg(2+) serves as cofactor.

It catalyses the reaction succinate + ATP + CoA = succinyl-CoA + ADP + phosphate. The catalysed reaction is GTP + succinate + CoA = succinyl-CoA + GDP + phosphate. It functions in the pathway carbohydrate metabolism; tricarboxylic acid cycle; succinate from succinyl-CoA (ligase route): step 1/1. Its function is as follows. Succinyl-CoA synthetase functions in the citric acid cycle (TCA), coupling the hydrolysis of succinyl-CoA to the synthesis of either ATP or GTP and thus represents the only step of substrate-level phosphorylation in the TCA. The beta subunit provides nucleotide specificity of the enzyme and binds the substrate succinate, while the binding sites for coenzyme A and phosphate are found in the alpha subunit. The polypeptide is Succinate--CoA ligase [ADP-forming] subunit beta (Xanthomonas euvesicatoria pv. vesicatoria (strain 85-10) (Xanthomonas campestris pv. vesicatoria)).